Consider the following 81-residue polypeptide: Putative membrane protein insertion efficiency factor (81 aa).

It belongs to the UPF0161 family.

It is found in the cell inner membrane. In terms of biological role, could be involved in insertion of integral membrane proteins into the membrane. In Thermosipho melanesiensis (strain DSM 12029 / CIP 104789 / BI429), this protein is Putative membrane protein insertion efficiency factor.